Here is a 590-residue protein sequence, read N- to C-terminus: 2-isopropylmalate synthase (590 aa).

The region spanning P40 to D314 is the Pyruvate carboxyltransferase domain. Residues D49, H253, H255, and N289 each coordinate Mg(2+). The interval A456–V590 is regulatory domain.

The protein belongs to the alpha-IPM synthase/homocitrate synthase family. LeuA type 2 subfamily. As to quaternary structure, homodimer. It depends on Mg(2+) as a cofactor.

It localises to the cytoplasm. It carries out the reaction 3-methyl-2-oxobutanoate + acetyl-CoA + H2O = (2S)-2-isopropylmalate + CoA + H(+). It participates in amino-acid biosynthesis; L-leucine biosynthesis; L-leucine from 3-methyl-2-oxobutanoate: step 1/4. Functionally, catalyzes the condensation of the acetyl group of acetyl-CoA with 3-methyl-2-oxobutanoate (2-ketoisovalerate) to form 3-carboxy-3-hydroxy-4-methylpentanoate (2-isopropylmalate). The polypeptide is 2-isopropylmalate synthase (Leifsonia xyli subsp. xyli (strain CTCB07)).